An 88-amino-acid polypeptide reads, in one-letter code: Putative membrane protein insertion efficiency factor (88 aa).

Residues 68-88 (VPPPNSDTRARGEADARSHRL) are disordered. The segment covering 75-88 (TRARGEADARSHRL) has biased composition (basic and acidic residues).

Belongs to the UPF0161 family.

It localises to the cell inner membrane. In terms of biological role, could be involved in insertion of integral membrane proteins into the membrane. The sequence is that of Putative membrane protein insertion efficiency factor from Burkholderia ambifaria (strain MC40-6).